The sequence spans 322 residues: UDP-N-acetylenolpyruvoylglucosamine reductase (322 aa).

The region spanning 36 to 202 is the FAD-binding PCMH-type domain; that stretch reads RAGGPAQVLF…TSVLFEGVPG (167 aa). The active site involves R182. Residue S231 is the Proton donor of the active site. E301 is a catalytic residue.

Belongs to the MurB family. FAD serves as cofactor.

It localises to the cytoplasm. It carries out the reaction UDP-N-acetyl-alpha-D-muramate + NADP(+) = UDP-N-acetyl-3-O-(1-carboxyvinyl)-alpha-D-glucosamine + NADPH + H(+). Its pathway is cell wall biogenesis; peptidoglycan biosynthesis. In terms of biological role, cell wall formation. The sequence is that of UDP-N-acetylenolpyruvoylglucosamine reductase from Brucella suis biovar 1 (strain 1330).